Consider the following 202-residue polypeptide: U-Kazal-Dg21.2 (202 aa).

Positions 1-20 (MKYFLWSAVTIFAIVNVVGA) are cleaved as a signal peptide. Positions 21 to 87 (KNSDFDPRCL…SFCQVEEDFD (67 aa)) are excised as a propeptide. 3 consecutive Kazal-like domains span residues 23–77 (SDFD…KTLM), 85–140 (DFDS…ICRN), and 148–202 (IDPK…KGEC). Cystine bridges form between Cys29-Cys62, Cys33-Cys55, Cys91-Cys124, Cys95-Cys117, and Cys103-Cys138. N-linked (GlcNAc...) asparagine glycosylation occurs at Asn140. The propeptide occupies 142-202 (SFKSELIDPK…NWTLIRKGEC (61 aa)). Disulfide bonds link Cys154–Cys187, Cys158–Cys180, and Cys166–Cys202. A glycan (N-linked (GlcNAc...) asparagine) is linked at Asn193.

As to expression, expressed by the venom gland.

It localises to the secreted. Its function is as follows. May act as a serine protease inhibitor, since it possess the kazal serine protease inhibitor signature. The recombinant peptide does not produce toxic effects on insects. The protein is U-Kazal-Dg21.2 of Dolopus genitalis (Giant Australian assassin fly).